Here is a 475-residue protein sequence, read N- to C-terminus: Aspartyl/glutamyl-tRNA(Asn/Gln) amidotransferase subunit B (475 aa).

Belongs to the GatB/GatE family. GatB subfamily. As to quaternary structure, heterotrimer of A, B and C subunits.

The enzyme catalyses L-glutamyl-tRNA(Gln) + L-glutamine + ATP + H2O = L-glutaminyl-tRNA(Gln) + L-glutamate + ADP + phosphate + H(+). It catalyses the reaction L-aspartyl-tRNA(Asn) + L-glutamine + ATP + H2O = L-asparaginyl-tRNA(Asn) + L-glutamate + ADP + phosphate + 2 H(+). In terms of biological role, allows the formation of correctly charged Asn-tRNA(Asn) or Gln-tRNA(Gln) through the transamidation of misacylated Asp-tRNA(Asn) or Glu-tRNA(Gln) in organisms which lack either or both of asparaginyl-tRNA or glutaminyl-tRNA synthetases. The reaction takes place in the presence of glutamine and ATP through an activated phospho-Asp-tRNA(Asn) or phospho-Glu-tRNA(Gln). This chain is Aspartyl/glutamyl-tRNA(Asn/Gln) amidotransferase subunit B, found in Chlorobium chlorochromatii (strain CaD3).